We begin with the raw amino-acid sequence, 618 residues long: Dihydroxy-acid dehydratase (618 aa).

Aspartate 81 contacts Mg(2+). Position 122 (cysteine 122) interacts with [2Fe-2S] cluster. Aspartate 123 and lysine 124 together coordinate Mg(2+). An N6-carboxylysine modification is found at lysine 124. Cysteine 195 serves as a coordination point for [2Fe-2S] cluster. Glutamate 491 lines the Mg(2+) pocket. The active-site Proton acceptor is the serine 517.

It belongs to the IlvD/Edd family. In terms of assembly, homodimer. The cofactor is [2Fe-2S] cluster. Requires Mg(2+) as cofactor.

It carries out the reaction (2R)-2,3-dihydroxy-3-methylbutanoate = 3-methyl-2-oxobutanoate + H2O. The catalysed reaction is (2R,3R)-2,3-dihydroxy-3-methylpentanoate = (S)-3-methyl-2-oxopentanoate + H2O. It participates in amino-acid biosynthesis; L-isoleucine biosynthesis; L-isoleucine from 2-oxobutanoate: step 3/4. It functions in the pathway amino-acid biosynthesis; L-valine biosynthesis; L-valine from pyruvate: step 3/4. Its function is as follows. Functions in the biosynthesis of branched-chain amino acids. Catalyzes the dehydration of (2R,3R)-2,3-dihydroxy-3-methylpentanoate (2,3-dihydroxy-3-methylvalerate) into 2-oxo-3-methylpentanoate (2-oxo-3-methylvalerate) and of (2R)-2,3-dihydroxy-3-methylbutanoate (2,3-dihydroxyisovalerate) into 2-oxo-3-methylbutanoate (2-oxoisovalerate), the penultimate precursor to L-isoleucine and L-valine, respectively. This Dechloromonas aromatica (strain RCB) protein is Dihydroxy-acid dehydratase.